Reading from the N-terminus, the 343-residue chain is Ferredoxin--NADP reductase (343 aa).

FAD is bound by residues Asp-36, Gln-44, Tyr-49, Val-89, Phe-124, Asp-289, and Thr-330.

This sequence belongs to the ferredoxin--NADP reductase type 2 family. Homodimer. FAD is required as a cofactor.

It carries out the reaction 2 reduced [2Fe-2S]-[ferredoxin] + NADP(+) + H(+) = 2 oxidized [2Fe-2S]-[ferredoxin] + NADPH. This Mesorhizobium japonicum (strain LMG 29417 / CECT 9101 / MAFF 303099) (Mesorhizobium loti (strain MAFF 303099)) protein is Ferredoxin--NADP reductase.